A 180-amino-acid chain; its full sequence is Regulator of G-protein signaling 8 (180 aa).

A Phosphoserine modification is found at S26. Positions 56-171 (SFDVLLSHKY…FLRSKMYLDL (116 aa)) constitute an RGS domain.

Interacts with GNAO1 and GNAI3.

Its subcellular location is the cell membrane. It localises to the membrane. The protein resides in the perikaryon. It is found in the cell projection. The protein localises to the dendrite. Its subcellular location is the nucleus. Its function is as follows. Regulates G protein-coupled receptor signaling cascades, including signaling via muscarinic acetylcholine receptor CHRM2 and dopamine receptor DRD2. Inhibits signal transduction by increasing the GTPase activity of G protein alpha subunits, thereby driving them into their inactive GDP-bound form. Modulates the activity of potassium channels that are activated in response to DRD2 and CHRM2 signaling. The polypeptide is Regulator of G-protein signaling 8 (Rgs8) (Mus musculus (Mouse)).